The primary structure comprises 1072 residues: Carbamoyl phosphate synthase large chain (1072 aa).

Positions 1 to 401 (MPKRLDINTI…SLLKAVRSLE (401 aa)) are carboxyphosphate synthetic domain. 12 residues coordinate ATP: R129, R169, G175, G176, K208, I210, E215, G241, V242, H243, Q284, and E298. In terms of domain architecture, ATP-grasp 1 spans 133 to 327 (RTLMQELNEP…IAKLAAKIAV (195 aa)). Q284, E298, and N300 together coordinate Mg(2+). Residues Q284, E298, and N300 each coordinate Mn(2+). The tract at residues 402 to 546 (LGVYHLELEH…YSTYGDENES (145 aa)) is oligomerization domain. The segment at 547–929 (VRTDRKSVVV…ALYKGLVASG (383 aa)) is carbamoyl phosphate synthetic domain. One can recognise an ATP-grasp 2 domain in the interval 671–861 (EAALTQLGIP…MANVATKVIL (191 aa)). ATP-binding residues include R707, R746, E752, G777, V778, H779, S780, Q820, and E832. Residues Q820, E832, and N834 each coordinate Mg(2+). Residues Q820, E832, and N834 each coordinate Mn(2+). One can recognise an MGS-like domain in the interval 930–1072 (INIPTHGSVI…QTKRHEVVHA (143 aa)). Residues 930 to 1072 (INIPTHGSVI…QTKRHEVVHA (143 aa)) form an allosteric domain region.

It belongs to the CarB family. Composed of two chains; the small (or glutamine) chain promotes the hydrolysis of glutamine to ammonia, which is used by the large (or ammonia) chain to synthesize carbamoyl phosphate. Tetramer of heterodimers (alpha,beta)4. Mg(2+) is required as a cofactor. It depends on Mn(2+) as a cofactor.

It catalyses the reaction hydrogencarbonate + L-glutamine + 2 ATP + H2O = carbamoyl phosphate + L-glutamate + 2 ADP + phosphate + 2 H(+). The enzyme catalyses hydrogencarbonate + NH4(+) + 2 ATP = carbamoyl phosphate + 2 ADP + phosphate + 2 H(+). It participates in amino-acid biosynthesis; L-arginine biosynthesis; carbamoyl phosphate from bicarbonate: step 1/1. It functions in the pathway pyrimidine metabolism; UMP biosynthesis via de novo pathway; (S)-dihydroorotate from bicarbonate: step 1/3. In terms of biological role, large subunit of the glutamine-dependent carbamoyl phosphate synthetase (CPSase). CPSase catalyzes the formation of carbamoyl phosphate from the ammonia moiety of glutamine, carbonate, and phosphate donated by ATP, constituting the first step of 2 biosynthetic pathways, one leading to arginine and/or urea and the other to pyrimidine nucleotides. The large subunit (synthetase) binds the substrates ammonia (free or transferred from glutamine from the small subunit), hydrogencarbonate and ATP and carries out an ATP-coupled ligase reaction, activating hydrogencarbonate by forming carboxy phosphate which reacts with ammonia to form carbamoyl phosphate. The protein is Carbamoyl phosphate synthase large chain of Bacillus cereus (strain G9842).